We begin with the raw amino-acid sequence, 301 residues long: NADH-cytochrome b5 reductase 3 (301 aa).

Gly2 carries the N-myristoyl glycine lipid modification. The region spanning 40 to 152 (DIKYPLRLID…RGPSGLLVYQ (113 aa)) is the FAD-binding FR-type domain. Lys42 is subject to N6-acetyllysine. Tyr43 is subject to Phosphotyrosine. FAD contacts are provided by Arg92, Pro93, Tyr94, Val109, Lys111, and Phe114. N6-acetyllysine is present on Lys120. Positions 126, 127, 128, and 185 each coordinate FAD.

This sequence belongs to the flavoprotein pyridine nucleotide cytochrome reductase family. In terms of assembly, component of a complex composed of cytochrome b5, NADH-cytochrome b5 reductase (CYB5R3) and MTARC2. Interacts with MTLN; the interaction is required to maintain cellular lipid composition and leads to stimulation of mitochondrial respiratory complex I activity. The cofactor is FAD. Expressed at late stages of erythroid maturation.

The protein resides in the endoplasmic reticulum membrane. The protein localises to the mitochondrion outer membrane. It localises to the cytoplasm. It catalyses the reaction 2 Fe(III)-[cytochrome b5] + NADH = 2 Fe(II)-[cytochrome b5] + NAD(+) + H(+). In terms of biological role, catalyzes the reduction of two molecules of cytochrome b5 using NADH as the electron donor. This is NADH-cytochrome b5 reductase 3 from Homo sapiens (Human).